The primary structure comprises 473 residues: Sensor histidine kinase YclK (473 aa).

Over 1-9 (MMKIKYLYQ) the chain is Cytoplasmic. A helical transmembrane segment spans residues 10 to 30 (LLLSHISILILAFVIIISLFS). Residues 31–164 (HFVKEFAYQN…GVEQMVNQVN (134 aa)) lie on the Extracellular side of the membrane. Residues 165-185 (LYMFYAVISTLVITILVSWLL) form a helical membrane-spanning segment. Residues 186-473 (SKFHVKRIQK…IRLPLTAKQQ (288 aa)) lie on the Cytoplasmic side of the membrane. One can recognise an HAMP domain in the interval 187 to 239 (KFHVKRIQKLREATDKVASGDYDIHLENSYGDEIGVLASDFNIMAKKLKQSRD). Positions 254 to 470 (DVSHELKTPL…KFIIRLPLTA (217 aa)) constitute a Histidine kinase domain. His-257 is modified (phosphohistidine; by autocatalysis).

Its subcellular location is the cell membrane. It catalyses the reaction ATP + protein L-histidine = ADP + protein N-phospho-L-histidine.. Functionally, could be member of the two-component regulatory system YclK/YclJ. Potentially phosphorylates YclJ. The sequence is that of Sensor histidine kinase YclK (yclK) from Bacillus subtilis (strain 168).